The primary structure comprises 401 residues: Ascaroside receptor GPR3 (401 aa).

Residues 1–16 (MQPFGDAWSQRHLAGV) lie on the Extracellular side of the membrane. The helical transmembrane segment at 17 to 37 (VLAGSVLSIVGSLYMILGFFF) threads the bilayer. Topologically, residues 38–47 (LRECRSFRHK) are cytoplasmic. The helical transmembrane segment at 48–68 (LILGLAVSDLLLALNFFIPSL) threads the bilayer. Residues 69 to 93 (SMVTGREISSPWNEGFCSANGFLMQ) are Extracellular-facing. A disulfide bond links cysteine 85 and cysteine 159. A helical membrane pass occupies residues 94–114 (LFFAQIDVWQISIALITLLML). The Cytoplasmic portion of the chain corresponds to 115–128 (SGPSMVLKWIRENV). The helical transmembrane segment at 129-149 (WAVWLFPWLVSLIAAFFAFGF) threads the bilayer. The Extracellular portion of the chain corresponds to 150–175 (WDYANVGGFCWLGSRNIRLYFNYIPR). A helical membrane pass occupies residues 176–196 (WIIILVCLVIYIAVYRLILHA). The Cytoplasmic segment spans residues 197-294 (RRRANIQKTY…QKQVRKIAIQ (98 aa)). The disordered stretch occupies residues 206–259 (YRGRASDRAPPQPVTTTAPATNPESEKVNPDEISSGNGSSSLDTSRSGSSTGFT). The segment covering 239-257 (SSGNGSSSLDTSRSGSSTG) has biased composition (low complexity). The chain crosses the membrane as a helical span at residues 295 to 315 (MISYPLAYAVLWAIPTIVMII). Topologically, residues 316-321 (QVARGG) are extracellular. The helical transmembrane segment at 322–342 (EGVSIHVEGLAKMLLVFNGFV) threads the bilayer. Topologically, residues 343–401 (DAHVYGFNERTAMGWRQRIRPAAQEDDEEAAGTSGGVHEVVSRPEPTLKNPNVWQQNMV) are cytoplasmic. The segment at 362–401 (RPAAQEDDEEAAGTSGGVHEVVSRPEPTLKNPNVWQQNMV) is disordered. Polar residues predominate over residues 391–401 (KNPNVWQQNMV).

The protein belongs to the G-protein coupled receptor 1 family. Interacts with ascaroside receptor GPR2; may form a functional heterodimer. Interacts with guanine nucleotide-binding protein alpha GPA2; to activate adenylate cyclase and positively regulate nematode trap formation.

It localises to the cell membrane. G protein-coupled receptor that senses nematode ascaroside pheromones and signals via adenylate cyclase to positively regulate trap formation for nematode capture. In Arthrobotrys oligospora (strain ATCC 24927 / CBS 115.81 / DSM 1491) (Nematode-trapping fungus), this protein is Ascaroside receptor GPR3.